Consider the following 427-residue polypeptide: Endothelin-1 receptor (427 aa).

The first 20 residues, 1–20 (MSIFCLAAYFWLTMVGGVMA), serve as a signal peptide directing secretion. Over 21–80 (DNPERYSANLSSHMEDFTPFPGTEINFLGTTHRPPNLALPSNGSMHGYCPQQTKITTAFK) the chain is Extracellular. Residues Asn29 and Asn62 are each glycosylated (N-linked (GlcNAc...) asparagine). A helical membrane pass occupies residues 81–102 (YINTVISCTIFIVGMVGNATLL). Over 103–112 (RIIYQNKCMR) the chain is Cytoplasmic. A helical transmembrane segment spans residues 113–132 (NGPNALIASLALGDLIYVVI). Topologically, residues 133-159 (DLPINVFKLLAGRWPFDHNDFGVFLCK) are extracellular. Cys158 and Cys239 are oxidised to a cystine. A helical transmembrane segment spans residues 160 to 181 (LFPFLQKSSVGITVLNLCALSV). Residues 182-205 (DRYRAVASWSRVQGIGIPLITAIE) are Cytoplasmic-facing. The chain crosses the membrane as a helical span at residues 206 to 229 (IVSIWILSFILAIPEAIGFVMVPF). At 230–256 (EYKGELHRTCMLNATSKFMEFYQDVKD) the chain is on the extracellular side. A glycan (N-linked (GlcNAc...) asparagine) is linked at Asn242. The helical transmembrane segment at 257–278 (WWLFGFYFCMPLVCTAIFYTLM) threads the bilayer. Topologically, residues 279–306 (TCEMLNRRNGSLRIALSEHLKQRREVAK) are cytoplasmic. The chain crosses the membrane as a helical span at residues 307–328 (TVFCLVVIFALCWFPLHLSRIL). Residues 329-347 (KKTVYDEMDKNRCELLSFL) are Extracellular-facing. Residues 348–372 (LLMDYIGINLATMNSCINPIALYFV) form a helical membrane-spanning segment. Residues 373–427 (SKKFKNCFQSCLCCCCHQSKSLMTSVPMNGTSIQWKNQEQNNHNTERSSHKDSMN) lie on the Cytoplasmic side of the membrane. Residues 408–427 (KNQEQNNHNTERSSHKDSMN) form a disordered region. Basic and acidic residues predominate over residues 416-427 (NTERSSHKDSMN). The residue at position 425 (Ser425) is a Phosphoserine.

It belongs to the G-protein coupled receptor 1 family. Endothelin receptor subfamily. EDNRA sub-subfamily. As to quaternary structure, interacts with HDAC7 and KAT5.

Its subcellular location is the cell membrane. Receptor for endothelin-1. Mediates its action by association with G proteins that activate a phosphatidylinositol-calcium second messenger system. The rank order of binding affinities for ET-A is: ET1 &gt; ET2 &gt;&gt; ET3. This is Endothelin-1 receptor from Mus musculus (Mouse).